Consider the following 540-residue polypeptide: Patellin-4 (540 aa).

At Ser-53 the chain carries Phosphoserine. Residues 61-183 (FADLKESEKK…EKKTEDVVTE (123 aa)) adopt a coiled-coil conformation. Positions 89-140 (LKTKKKESSPMKEKKEEVVKPEAEVEKKKEEAAEEKVEEEKKSEAVVTEEAP) are disordered. Positions 94–140 (KESSPMKEKKEEVVKPEAEVEKKKEEAAEEKVEEEKKSEAVVTEEAP) are enriched in basic and acidic residues. Lys-249 is covalently cross-linked (Glycyl lysine isopeptide (Lys-Gly) (interchain with G-Cter in ubiquitin)). Residues 258–428 (GEEFGEDLAT…QYGGFKTVDD (171 aa)) enclose the CRAL-TRIO domain. Positions 433–534 (NETVSEVVVK…KKKVLYRYRT (102 aa)) constitute a GOLD domain.

Belongs to the patellin family.

It localises to the membrane. The protein localises to the cytoplasm. In terms of biological role, carrier protein that may be involved in membrane-trafficking events associated with cell plate formation during cytokinesis. Binds to some hydrophobic molecules such as phosphoinositides and promotes their transfer between the different cellular sites. The polypeptide is Patellin-4 (PATL4) (Arabidopsis thaliana (Mouse-ear cress)).